Here is a 364-residue protein sequence, read N- to C-terminus: Probable dual-specificity RNA methyltransferase RlmN (364 aa).

The active-site Proton acceptor is Glu-107. One can recognise a Radical SAM core domain in the interval His-113–Asp-346. Cys-120 and Cys-351 are disulfide-bonded. [4Fe-4S] cluster-binding residues include Cys-127, Cys-131, and Cys-134. Residues Gly-177 to Glu-178, Ser-209, Ser-232 to His-234, and Asn-308 contribute to the S-adenosyl-L-methionine site. The S-methylcysteine intermediate role is filled by Cys-351.

This sequence belongs to the radical SAM superfamily. RlmN family. [4Fe-4S] cluster is required as a cofactor.

The protein localises to the cytoplasm. It carries out the reaction adenosine(2503) in 23S rRNA + 2 reduced [2Fe-2S]-[ferredoxin] + 2 S-adenosyl-L-methionine = 2-methyladenosine(2503) in 23S rRNA + 5'-deoxyadenosine + L-methionine + 2 oxidized [2Fe-2S]-[ferredoxin] + S-adenosyl-L-homocysteine. It catalyses the reaction adenosine(37) in tRNA + 2 reduced [2Fe-2S]-[ferredoxin] + 2 S-adenosyl-L-methionine = 2-methyladenosine(37) in tRNA + 5'-deoxyadenosine + L-methionine + 2 oxidized [2Fe-2S]-[ferredoxin] + S-adenosyl-L-homocysteine. In terms of biological role, specifically methylates position 2 of adenine 2503 in 23S rRNA and position 2 of adenine 37 in tRNAs. Confers resistance to some classes of antibiotics. In Staphylococcus carnosus (strain TM300), this protein is Probable dual-specificity RNA methyltransferase RlmN.